The chain runs to 438 residues: Sphingomyelinase phosphodiesterase D (438 aa).

A signal peptide spans 1 to 17; that stretch reads MKIILILVLVLVVSINA. Positions 27 and 29 each coordinate Zn(2+). N-linked (GlcNAc...) asparagine glycosylation occurs at N40. D111 and N148 together coordinate Zn(2+). N160 is a glycosylation site (N-linked (GlcNAc...) asparagine). A Zn(2+)-binding site is contributed by H247. A glycan (N-linked (GlcNAc...) asparagine) is linked at N271. Residues H287 and H289 each contribute to the Zn(2+) site. N338 and N359 each carry an N-linked (GlcNAc...) asparagine glycan.

Belongs to the acid sphingomyelinase family. Zn(2+) serves as cofactor.

Its subcellular location is the secreted. This chain is Sphingomyelinase phosphodiesterase D (sgmD), found in Dictyostelium discoideum (Social amoeba).